Here is a 447-residue protein sequence, read N- to C-terminus: Xylose isomerase (447 aa).

Catalysis depends on residues His102 and Asp105. Positions 233, 269, 272, 297, 308, 310, and 340 each coordinate Mg(2+).

Belongs to the xylose isomerase family. Homotetramer. The cofactor is Mg(2+).

The protein resides in the cytoplasm. The enzyme catalyses alpha-D-xylose = alpha-D-xylulofuranose. The chain is Xylose isomerase from Pediococcus pentosaceus (strain ATCC 25745 / CCUG 21536 / LMG 10740 / 183-1w).